Reading from the N-terminus, the 237-residue chain is tRNA (guanine-N(7)-)-methyltransferase (237 aa).

S-adenosyl-L-methionine-binding residues include Glu68, Glu93, Asp120, and Asp143. Asp143 is an active-site residue. Residues Lys147, Asp179, and 216 to 219 (TKFE) contribute to the substrate site.

Belongs to the class I-like SAM-binding methyltransferase superfamily. TrmB family.

It carries out the reaction guanosine(46) in tRNA + S-adenosyl-L-methionine = N(7)-methylguanosine(46) in tRNA + S-adenosyl-L-homocysteine. It participates in tRNA modification; N(7)-methylguanine-tRNA biosynthesis. Its function is as follows. Catalyzes the formation of N(7)-methylguanine at position 46 (m7G46) in tRNA. This chain is tRNA (guanine-N(7)-)-methyltransferase, found in Shewanella pealeana (strain ATCC 700345 / ANG-SQ1).